Here is a 323-residue protein sequence, read N- to C-terminus: Methionyl-tRNA formyltransferase (323 aa).

117 to 120 (SLLP) serves as a coordination point for (6S)-5,6,7,8-tetrahydrofolate.

It belongs to the Fmt family.

It carries out the reaction L-methionyl-tRNA(fMet) + (6R)-10-formyltetrahydrofolate = N-formyl-L-methionyl-tRNA(fMet) + (6S)-5,6,7,8-tetrahydrofolate + H(+). Attaches a formyl group to the free amino group of methionyl-tRNA(fMet). The formyl group appears to play a dual role in the initiator identity of N-formylmethionyl-tRNA by promoting its recognition by IF2 and preventing the misappropriation of this tRNA by the elongation apparatus. The polypeptide is Methionyl-tRNA formyltransferase (Albidiferax ferrireducens (strain ATCC BAA-621 / DSM 15236 / T118) (Rhodoferax ferrireducens)).